The sequence spans 504 residues: Glycerol kinase (504 aa).

T12 lines the ADP pocket. ATP contacts are provided by T12, T13, and S14. T12 is a sn-glycerol 3-phosphate binding site. ADP is bound at residue R16. The sn-glycerol 3-phosphate site is built by R82, E83, Y134, and D246. Glycerol-binding residues include R82, E83, Y134, D246, and Q247. ADP is bound by residues T268 and G312. ATP-binding residues include T268, G312, Q316, and G413. Positions 413 and 417 each coordinate ADP.

Belongs to the FGGY kinase family.

The catalysed reaction is glycerol + ATP = sn-glycerol 3-phosphate + ADP + H(+). The protein operates within polyol metabolism; glycerol degradation via glycerol kinase pathway; sn-glycerol 3-phosphate from glycerol: step 1/1. Its activity is regulated as follows. Inhibited by fructose 1,6-bisphosphate (FBP). Functionally, key enzyme in the regulation of glycerol uptake and metabolism. Catalyzes the phosphorylation of glycerol to yield sn-glycerol 3-phosphate. The protein is Glycerol kinase of Paenarthrobacter aurescens (strain TC1).